The primary structure comprises 903 residues: DNA gyrase subunit A (903 aa).

One can recognise a Topo IIA-type catalytic domain in the interval 36-499 (LPDARDGFKP…AIDDSDDEDL (464 aa)). The active-site O-(5'-phospho-DNA)-tyrosine intermediate is the tyrosine 124. Positions 526–532 (QNRGGKG) match the GyrA-box motif. Basic and acidic residues predominate over residues 881 to 895 (VDDDSVVKDDAEKQE). The interval 881–903 (VDDDSVVKDDAEKQEIGPTETEE) is disordered.

This sequence belongs to the type II topoisomerase GyrA/ParC subunit family. Heterotetramer, composed of two GyrA and two GyrB chains. In the heterotetramer, GyrA contains the active site tyrosine that forms a transient covalent intermediate with DNA, while GyrB binds cofactors and catalyzes ATP hydrolysis.

The protein localises to the cytoplasm. It carries out the reaction ATP-dependent breakage, passage and rejoining of double-stranded DNA.. Its function is as follows. A type II topoisomerase that negatively supercoils closed circular double-stranded (ds) DNA in an ATP-dependent manner to modulate DNA topology and maintain chromosomes in an underwound state. Negative supercoiling favors strand separation, and DNA replication, transcription, recombination and repair, all of which involve strand separation. Also able to catalyze the interconversion of other topological isomers of dsDNA rings, including catenanes and knotted rings. Type II topoisomerases break and join 2 DNA strands simultaneously in an ATP-dependent manner. The polypeptide is DNA gyrase subunit A (Fibrobacter succinogenes (strain ATCC 19169 / S85)).